A 322-amino-acid polypeptide reads, in one-letter code: Elongation factor Ts, mitochondrial (322 aa).

It belongs to the EF-Ts family.

It localises to the mitochondrion. Associates with the EF-Tu.GDP complex and induces the exchange of GDP to GTP. It remains bound to the aminoacyl-tRNA.EF-Tu.GTP complex up to the GTP hydrolysis stage on the ribosome. The chain is Elongation factor Ts, mitochondrial from Chlamydomonas reinhardtii (Chlamydomonas smithii).